The chain runs to 171 residues: Large ribosomal subunit protein bL9 (171 aa).

Belongs to the bacterial ribosomal protein bL9 family.

Functionally, binds to the 23S rRNA. This chain is Large ribosomal subunit protein bL9, found in Orientia tsutsugamushi (strain Ikeda) (Rickettsia tsutsugamushi).